Consider the following 247-residue polypeptide: Isoprenyl transferase (247 aa).

Residue D18 is part of the active site. D18 contributes to the Mg(2+) binding site. Substrate contacts are provided by residues 19–22, W23, R31, H35, and 63–65; these read GNGR and SSE. N66 acts as the Proton acceptor in catalysis. Substrate contacts are provided by residues W67, R69, R186, and 192–194; that span reads RLS. Position 205 (E205) interacts with Mg(2+).

This sequence belongs to the UPP synthase family. Homodimer. Mg(2+) is required as a cofactor.

In terms of biological role, catalyzes the condensation of isopentenyl diphosphate (IPP) with allylic pyrophosphates generating different type of terpenoids. This chain is Isoprenyl transferase, found in Rhizobium meliloti (strain 1021) (Ensifer meliloti).